A 531-amino-acid polypeptide reads, in one-letter code: 2-isopropylmalate synthase (531 aa).

The region spanning 8–284 (IIIFDTTLRD…LTNIDTKQIY (277 aa)) is the Pyruvate carboxyltransferase domain. Residues Asp-17, His-208, His-210, and Asn-244 each contribute to the Mn(2+) site. Residues 408-531 (RVELVQVSCG…TQDKQTEVTA (124 aa)) form a regulatory domain region.

This sequence belongs to the alpha-IPM synthase/homocitrate synthase family. LeuA type 1 subfamily. Homodimer. Mn(2+) serves as cofactor.

It localises to the cytoplasm. The enzyme catalyses 3-methyl-2-oxobutanoate + acetyl-CoA + H2O = (2S)-2-isopropylmalate + CoA + H(+). The protein operates within amino-acid biosynthesis; L-leucine biosynthesis; L-leucine from 3-methyl-2-oxobutanoate: step 1/4. Functionally, catalyzes the condensation of the acetyl group of acetyl-CoA with 3-methyl-2-oxobutanoate (2-ketoisovalerate) to form 3-carboxy-3-hydroxy-4-methylpentanoate (2-isopropylmalate). The polypeptide is 2-isopropylmalate synthase (Trichormus variabilis (strain ATCC 29413 / PCC 7937) (Anabaena variabilis)).